Reading from the N-terminus, the 384-residue chain is Prostaglandin E synthase 2 (384 aa).

Residues 1–56 (MAQAARLSWVLVSSRCALTEGLLTRPWQPLSAQSRAGFTRVAAGSRGAAVRKGSPR) are Lumenal-facing. The helical transmembrane segment at 57 to 73 (LLGAAALALGGALGLYH) threads the bilayer. Residues 74-384 (TVRWHQRSQD…VHHVNPSCKD (311 aa)) lie on the Cytoplasmic side of the membrane. The Glutaredoxin domain maps to 89-192 (SAAQLPLSNS…EVITYYPPMK (104 aa)). Glutathione contacts are provided by residues Val-147 and 163–164 (DS). The GST C-terminal domain maps to 262-376 (YIVREGKFGA…RAIEEAPSVH (115 aa)).

This sequence belongs to the GST superfamily. Homodimer. Interacts with EXOSC10. May interact with CEBPB. Post-translationally, synthesized as a Golgi membrane-associated protein, and the proteolytic removal of the N-terminal hydrophobic domain leads to the formation of a mature cytosolic enzyme. As to expression, widely expressed. Expressed in brain, heart, liver, colon and lung.

The protein localises to the golgi apparatus membrane. The protein resides in the nucleus. It localises to the cytoplasm. The enzyme catalyses prostaglandin H2 = prostaglandin E2. It carries out the reaction prostaglandin H2 = (12S)-hydroxy-(5Z,8E,10E)-heptadecatrienoate + malonaldehyde. The protein operates within lipid metabolism; prostaglandin biosynthesis. Isomerase activity is increased by sulfhydril compounds. Dithiothreitol (DTT) is most effective, followed by glutathione (GSH) and 2-mercaptoethanol. Isomerase that catalyzes the conversion of PGH2 into the more stable prostaglandin E2 (PGE2) (in vitro). The biological function and the GSH-dependent property of PTGES2 is still under debate. In vivo, PTGES2 could form a complex with GSH and heme and would not participate in PGE2 synthesis but would catalyze the degradation of prostaglandin E2 H2 (PGH2) to 12(S)-hydroxy-5(Z),8(E),10(E)-heptadecatrienoic acid (HHT) and malondialdehyde (MDA). May also have transactivation activity toward IFN-gamma (IFNG), possibly via an interaction with CEBPB; however, the relevance of transcription activation activity remains unclear. In Mus musculus (Mouse), this protein is Prostaglandin E synthase 2 (Ptges2).